The primary structure comprises 179 residues: Adenine phosphoribosyltransferase (179 aa).

The protein belongs to the purine/pyrimidine phosphoribosyltransferase family. As to quaternary structure, homodimer.

Its subcellular location is the cytoplasm. The catalysed reaction is AMP + diphosphate = 5-phospho-alpha-D-ribose 1-diphosphate + adenine. It functions in the pathway purine metabolism; AMP biosynthesis via salvage pathway; AMP from adenine: step 1/1. Catalyzes a salvage reaction resulting in the formation of AMP, that is energically less costly than de novo synthesis. The sequence is that of Adenine phosphoribosyltransferase from Helicobacter pylori (strain G27).